The primary structure comprises 263 residues: Ribonuclease HII (263 aa).

The region spanning 71 to 262 (QAIAGIDEVG…VKSMCCDSTN (192 aa)) is the RNase H type-2 domain. The a divalent metal cation site is built by aspartate 77, glutamate 78, and aspartate 172.

It belongs to the RNase HII family. It depends on Mn(2+) as a cofactor. Mg(2+) is required as a cofactor.

It is found in the cytoplasm. It catalyses the reaction Endonucleolytic cleavage to 5'-phosphomonoester.. Its function is as follows. Endonuclease that specifically degrades the RNA of RNA-DNA hybrids. The chain is Ribonuclease HII from Streptococcus pyogenes serotype M3 (strain ATCC BAA-595 / MGAS315).